A 334-amino-acid polypeptide reads, in one-letter code: Glycerol-3-phosphate dehydrogenase [NAD(P)+] (334 aa).

Positions 13, 33, and 106 each coordinate NADPH. Sn-glycerol 3-phosphate is bound by residues Lys-106, Gly-137, and Ser-139. Ala-141 contributes to the NADPH binding site. Positions 192, 245, 255, 256, and 257 each coordinate sn-glycerol 3-phosphate. Lys-192 acts as the Proton acceptor in catalysis. Arg-256 contacts NADPH. NADPH contacts are provided by Val-280 and Glu-282.

The protein belongs to the NAD-dependent glycerol-3-phosphate dehydrogenase family.

Its subcellular location is the cytoplasm. The catalysed reaction is sn-glycerol 3-phosphate + NAD(+) = dihydroxyacetone phosphate + NADH + H(+). The enzyme catalyses sn-glycerol 3-phosphate + NADP(+) = dihydroxyacetone phosphate + NADPH + H(+). It functions in the pathway membrane lipid metabolism; glycerophospholipid metabolism. Its function is as follows. Catalyzes the reduction of the glycolytic intermediate dihydroxyacetone phosphate (DHAP) to sn-glycerol 3-phosphate (G3P), the key precursor for phospholipid synthesis. The chain is Glycerol-3-phosphate dehydrogenase [NAD(P)+] from Chlamydia pneumoniae (Chlamydophila pneumoniae).